We begin with the raw amino-acid sequence, 62 residues long: Large ribosomal subunit protein bL28 (62 aa).

Belongs to the bacterial ribosomal protein bL28 family.

This chain is Large ribosomal subunit protein bL28, found in Moorella thermoacetica (strain ATCC 39073 / JCM 9320).